The sequence spans 491 residues: Glutamyl-tRNA(Gln) amidotransferase subunit A (491 aa).

Active-site charge relay system residues include Lys79 and Ser154. Ser178 (acyl-ester intermediate) is an active-site residue.

This sequence belongs to the amidase family. GatA subfamily. In terms of assembly, heterotrimer of A, B and C subunits.

It catalyses the reaction L-glutamyl-tRNA(Gln) + L-glutamine + ATP + H2O = L-glutaminyl-tRNA(Gln) + L-glutamate + ADP + phosphate + H(+). In terms of biological role, allows the formation of correctly charged Gln-tRNA(Gln) through the transamidation of misacylated Glu-tRNA(Gln) in organisms which lack glutaminyl-tRNA synthetase. The reaction takes place in the presence of glutamine and ATP through an activated gamma-phospho-Glu-tRNA(Gln). The sequence is that of Glutamyl-tRNA(Gln) amidotransferase subunit A from Natranaerobius thermophilus (strain ATCC BAA-1301 / DSM 18059 / JW/NM-WN-LF).